The sequence spans 231 residues: Octanoyltransferase (231 aa).

Positions P29–P231 constitute a BPL/LPL catalytic domain. Substrate-binding positions include R68–H75, A164–G166, and G177–A179. The active-site Acyl-thioester intermediate is the C195.

The protein belongs to the LipB family.

It localises to the cytoplasm. The enzyme catalyses octanoyl-[ACP] + L-lysyl-[protein] = N(6)-octanoyl-L-lysyl-[protein] + holo-[ACP] + H(+). Its pathway is protein modification; protein lipoylation via endogenous pathway; protein N(6)-(lipoyl)lysine from octanoyl-[acyl-carrier-protein]: step 1/2. Catalyzes the transfer of endogenously produced octanoic acid from octanoyl-acyl-carrier-protein onto the lipoyl domains of lipoate-dependent enzymes. Lipoyl-ACP can also act as a substrate although octanoyl-ACP is likely to be the physiological substrate. The chain is Octanoyltransferase from Verminephrobacter eiseniae (strain EF01-2).